The chain runs to 372 residues: N-methyl-L-tryptophan oxidase (372 aa).

FAD is bound at residue 4-34; sequence DLIIIGSGSVGAAAGYYATRAGLNVLMTDAH. Cysteine 308 is subject to S-8alpha-FAD cysteine.

The protein belongs to the MSOX/MTOX family. MTOX subfamily. Monomer. FAD is required as a cofactor.

The catalysed reaction is N(alpha)-methyl-L-tryptophan + O2 + H2O = L-tryptophan + formaldehyde + H2O2. Functionally, catalyzes the oxidative demethylation of N-methyl-L-tryptophan. The chain is N-methyl-L-tryptophan oxidase from Escherichia coli (strain K12 / DH10B).